Here is a 302-residue protein sequence, read N- to C-terminus: 4-hydroxy-tetrahydrodipicolinate synthase (302 aa).

Pyruvate is bound at residue T55. The Proton donor/acceptor role is filled by Y144. Catalysis depends on K172, which acts as the Schiff-base intermediate with substrate. V214 provides a ligand contact to pyruvate.

It belongs to the DapA family. As to quaternary structure, homotetramer; dimer of dimers.

The protein localises to the cytoplasm. It catalyses the reaction L-aspartate 4-semialdehyde + pyruvate = (2S,4S)-4-hydroxy-2,3,4,5-tetrahydrodipicolinate + H2O + H(+). It participates in amino-acid biosynthesis; L-lysine biosynthesis via DAP pathway; (S)-tetrahydrodipicolinate from L-aspartate: step 3/4. Catalyzes the condensation of (S)-aspartate-beta-semialdehyde [(S)-ASA] and pyruvate to 4-hydroxy-tetrahydrodipicolinate (HTPA). In Synechococcus sp. (strain WH7803), this protein is 4-hydroxy-tetrahydrodipicolinate synthase.